The primary structure comprises 253 residues: 5-oxoprolinase subunit A (253 aa).

It belongs to the LamB/PxpA family. Forms a complex composed of PxpA, PxpB and PxpC.

The enzyme catalyses 5-oxo-L-proline + ATP + 2 H2O = L-glutamate + ADP + phosphate + H(+). In terms of biological role, catalyzes the cleavage of 5-oxoproline to form L-glutamate coupled to the hydrolysis of ATP to ADP and inorganic phosphate. The protein is 5-oxoprolinase subunit A of Azorhizobium caulinodans (strain ATCC 43989 / DSM 5975 / JCM 20966 / LMG 6465 / NBRC 14845 / NCIMB 13405 / ORS 571).